Consider the following 543-residue polypeptide: Malate synthase (543 aa).

It belongs to the malate synthase family. In terms of assembly, homodimer.

It is found in the cytoplasm. The catalysed reaction is glyoxylate + acetyl-CoA + H2O = (S)-malate + CoA + H(+). Its pathway is carbohydrate metabolism; glyoxylate cycle; (S)-malate from isocitrate: step 2/2. The protein is Malate synthase (aceB) of Streptomyces arenae.